The sequence spans 590 residues: Rho GTPase-activating protein 36 (590 aa).

The Rho-GAP domain maps to 214–414 (MSLNPIAQQI…AMIDNWDILF (201 aa)). A disordered region spans residues 526–590 (IPNNEDTDSD…KGKFATRFFP (65 aa)).

As to quaternary structure, may interacts (via the Rho-GAP domain) with the active form of RAC1.

Functionally, GTPase activator for the Rho-type GTPases by converting them to an inactive GDP-bound state. In Mus musculus (Mouse), this protein is Rho GTPase-activating protein 36 (Arhgap36).